Consider the following 344-residue polypeptide: Phosphoribosylformylglycinamidine cyclo-ligase (344 aa).

It belongs to the AIR synthase family.

Its subcellular location is the cytoplasm. It catalyses the reaction 2-formamido-N(1)-(5-O-phospho-beta-D-ribosyl)acetamidine + ATP = 5-amino-1-(5-phospho-beta-D-ribosyl)imidazole + ADP + phosphate + H(+). Its pathway is purine metabolism; IMP biosynthesis via de novo pathway; 5-amino-1-(5-phospho-D-ribosyl)imidazole from N(2)-formyl-N(1)-(5-phospho-D-ribosyl)glycinamide: step 2/2. The polypeptide is Phosphoribosylformylglycinamidine cyclo-ligase (Exiguobacterium sp. (strain ATCC BAA-1283 / AT1b)).